The primary structure comprises 490 residues: Secretory immunoglobulin A-binding protein EsiB (490 aa).

Positions Met1 to Gly23 are cleaved as a signal peptide. Sel1-like repeat units lie at residues Ala39–Tyr74, Ala77–Gly109, Pro111–Gly145, Met153–Asn182, Ser185–Asp218, Gln222–Asn254, Ile256–Asn290, Ser291–Asp327, Ala328–Gly361, Ala364–Gly397, and Ser399–Ser430. Mg(2+) is bound by residues His122, Glu159, and Asp161.

Interacts with human secreted IgA (SIgA) at least via resides 244-260. Mg(2+) serves as cofactor.

It localises to the cell surface. Its function is as follows. Upon host (human neutrophil) infection interferes with productive FCAR signaling, inhibiting secreted IgA (SIgA) effector functions and probably avoiding neutrophil activation. Inhibits the SIgA-mediated oxidative burst by neutrophils, decreases generation of ROS (reactive oxygen species) by neutrophils and reduces chemotaxis by neutrophils, all of which are SIgA effector functions used to stimulate the immune response. Does not block SIgA-binding to its receptor (FCAR) on neutrophils, but it decreases SIgA-stimulated phosphorylation of cytoplasmic proteins, including phospholipase C-gamma and MAP kinases, all actions that may be advantageous to the pathogen. In Escherichia coli O6:H1 (strain CFT073 / ATCC 700928 / UPEC), this protein is Secretory immunoglobulin A-binding protein EsiB.